A 113-amino-acid polypeptide reads, in one-letter code: Hydrogenase maturation factor HypA (113 aa).

His2 serves as a coordination point for Ni(2+). Zn(2+) contacts are provided by Cys73, Cys76, Cys89, and Cys92.

The protein belongs to the HypA/HybF family.

Functionally, involved in the maturation of [NiFe] hydrogenases. Required for nickel insertion into the metal center of the hydrogenase. This is Hydrogenase maturation factor HypA from Acidithiobacillus ferrooxidans (strain ATCC 23270 / DSM 14882 / CIP 104768 / NCIMB 8455) (Ferrobacillus ferrooxidans (strain ATCC 23270)).